The primary structure comprises 214 residues: Variable small protein 24 (214 aa).

Residues 1 to 18 form the signal peptide; the sequence is MRKRISAIIMTLFMVFMS. Residue C19 is the site of N-palmitoyl cysteine attachment. Residue C19 is the site of S-diacylglycerol cysteine attachment. Residues 146-172 form a disordered region; that stretch reads TELGKKDASDDDTKKAIKKDNSDKTKG.

Belongs to the variable small protein (Vsp) family.

It is found in the cell outer membrane. The Vlp and Vsp proteins are antigenically distinct proteins, only one vlp or vsp gene is transcriptionally active at any one time. Switching between these genes is a mechanism of host immune response evasion. This Borrelia hermsii protein is Variable small protein 24.